Consider the following 318-residue polypeptide: Acetyl-coenzyme A carboxylase carboxyl transferase subunit alpha (318 aa).

The CoA carboxyltransferase C-terminal domain maps to 39–293 (KLEKKVDKMR…HEALARHLKE (255 aa)).

Belongs to the AccA family. As to quaternary structure, acetyl-CoA carboxylase is a heterohexamer composed of biotin carboxyl carrier protein (AccB), biotin carboxylase (AccC) and two subunits each of ACCase subunit alpha (AccA) and ACCase subunit beta (AccD).

The protein localises to the cytoplasm. It carries out the reaction N(6)-carboxybiotinyl-L-lysyl-[protein] + acetyl-CoA = N(6)-biotinyl-L-lysyl-[protein] + malonyl-CoA. The protein operates within lipid metabolism; malonyl-CoA biosynthesis; malonyl-CoA from acetyl-CoA: step 1/1. Its function is as follows. Component of the acetyl coenzyme A carboxylase (ACC) complex. First, biotin carboxylase catalyzes the carboxylation of biotin on its carrier protein (BCCP) and then the CO(2) group is transferred by the carboxyltransferase to acetyl-CoA to form malonyl-CoA. The chain is Acetyl-coenzyme A carboxylase carboxyl transferase subunit alpha from Geobacter metallireducens (strain ATCC 53774 / DSM 7210 / GS-15).